The chain runs to 151 residues: Inactive oocyte-specific homeobox protein 2 (151 aa).

Residues 1-97 (MAEGPSLHPK…PMASRKFRKE (97 aa)) form a disordered region. Positions 37 to 54 (MRQSPLVTPGSTTKSSLS) are enriched in polar residues.

Belongs to the paired homeobox family. Obox subfamily. As to expression, specifically expressed in oocytes and early embryos.

In contrast to other Obox family proteins, displays a truncated homeobox domain and does not bind DNA. The protein is Inactive oocyte-specific homeobox protein 2 of Mus musculus (Mouse).